Here is a 143-residue protein sequence, read N- to C-terminus: Peptidyl-prolyl cis-trans isomerase FKBP15-3 (143 aa).

The PPIase FKBP-type domain maps to 56-143; sequence GKRVSVHYTG…VFDVELLNVK (88 aa).

It belongs to the FKBP-type PPIase family.

The catalysed reaction is [protein]-peptidylproline (omega=180) = [protein]-peptidylproline (omega=0). PPIases accelerate the folding of proteins. It catalyzes the cis-trans isomerization of proline imidic peptide bonds in oligopeptides. The protein is Peptidyl-prolyl cis-trans isomerase FKBP15-3 (FKBP15-3) of Arabidopsis thaliana (Mouse-ear cress).